Here is a 3750-residue protein sequence, read N- to C-terminus: Cubilin homolog (3750 aa).

The N-terminal stretch at 1 to 28 (MEGAARSRLLLCWTLLAIITDTWPIAEG) is a signal peptide. 2 N-linked (GlcNAc...) asparagine glycosylation sites follow: N51 and N123. The EGF-like 1 domain maps to 154-190 (EANSCASGPCENGGTCYNTYTGFRCQCRSAFEGTKCE). 6 cysteine pairs are disulfide-bonded: C158-C169, C163-C178, C180-C189, C196-C212, C206-C221, and C223-C232. Residues 192–233 (DVNECALYEGTDLGCQNGGQCQNHFGTYSCLCQPGWHGMHCT) form the EGF-like 2; calcium-binding domain. One can recognise an EGF-like 3; calcium-binding domain in the interval 282-308 (DVDECSDSAAHKPCSTSCINLPGSFTC). Residues 324 to 352 (DLDECQTNNGGCSLSPKVDCINTYGSYHC) form the EGF-like 4; calcium-binding domain. N424 is a glycosylation site (N-linked (GlcNAc...) asparagine). EGF-like domains are found at residues 426-463 (TTTNCKENPCLNGGICLFAGPSNYTCLCPIGFRPPICE) and 465-503 (QPSPCDQHPCKNGGRCRPTTSGDLFVCQCLPGYRGRLCE). 7 disulfides stabilise this stretch: C430/C441, C435/C451, C453/C462, C469/C480, C474/C491, C493/C502, and C509/C535. An N-linked (GlcNAc...) asparagine glycan is attached at N448. CUB domains lie at 509-623 (CNGM…WNSM), 627-738 (CGGR…YSVE), 744-852 (CGGV…YRMA), 853-971 (CDYK…YRAL), 978-1095 (CGGV…YTFE), 1100-1212 (CGGH…WRIF), 1216-1331 (CGGS…YKAN), 1332-1434 (CIRN…QLDY), 1439-1550 (CMEE…YRTV), 1554-1670 (CGGK…FHES), 1671-1788 (CGQT…YMTM), 1792-1902 (CGSI…YNYE), and 1903-2001 (HHNE…WNRL). N-linked (GlcNAc...) asparagine glycans are attached at residues N542 and N548. C562 and C584 form a disulfide bridge. N609 carries an N-linked (GlcNAc...) asparagine glycan. Cystine bridges form between C627/C654, C681/C701, C744/C770, C853/C879, C913/C933, and C978/C1004. N-linked (GlcNAc...) asparagine glycosylation is present at N871. Residues E1026, D1034, and D1080 each contribute to the Ca(2+) site. C1031 and C1058 are joined by a disulfide. A disulfide bond links C1100 and C1126. Residue N1119 is glycosylated (N-linked (GlcNAc...) asparagine). E1148 serves as a coordination point for Ca(2+). N1152 carries N-linked (GlcNAc...) asparagine glycosylation. The cysteines at positions 1153 and 1175 are disulfide-linked. Residues D1156 and D1197 each contribute to the Ca(2+) site. Cysteines 1216 and 1242 form a disulfide. E1264, D1272, and D1316 together coordinate Ca(2+). An intrachain disulfide couples C1269 to C1292. C1332 and C1360 are joined by a disulfide. Residues N1335, N1359, N1413, and N1424 are each glycosylated (N-linked (GlcNAc...) asparagine). A disulfide bond links C1439 and C1465. The N-linked (GlcNAc...) asparagine glycan is linked to N1491. 7 disulfide bridges follow: C1492–C1513, C1554–C1580, C1607–C1631, C1671–C1697, C1733–C1755, C1792–C1818, and C1845–C1866. N-linked (GlcNAc...) asparagine glycosylation is present at N1694. Residues N1908 and N2009 are each glycosylated (N-linked (GlcNAc...) asparagine). Intrachain disulfides connect C2019–C2048 and C2077–C2100. CUB domains follow at residues 2019-2139 (CGNQ…VRTA), 2140-2256 (CGSE…FRFE), 2262-2383 (DSGR…LSVA), 2385-2512 (CGGS…YTSL), and 2516-2646 (CGET…MNEV). 4 N-linked (GlcNAc...) asparagine glycosylation sites follow: N2092, N2128, N2152, and N2231. C2140 and C2167 are disulfide-bonded. C2324 and C2346 are oxidised to a cystine. The N-linked (GlcNAc...) asparagine glycan is linked to N2377. Residues C2385 and C2416 are joined by a disulfide bond. N2442 carries an N-linked (GlcNAc...) asparagine glycan. Intrachain disulfides connect C2445/C2474 and C2516/C2542. Residues N2655, N2671, N2682, and N2772 are each glycosylated (N-linked (GlcNAc...) asparagine). Cystine bridges form between C2761–C2790 and C2837–C2859. 8 consecutive CUB domains span residues 2761–2895 (CGGV…IKYG), 2898–3010 (CGGK…FERN), 3011–3128 (CGGL…YTSR), 3130–3246 (CGGI…VRVM), 3249–3364 (CDEK…INAI), 3368–3512 (CGSS…VALN), 3522–3615 (LQGR…YLAS), and 3623–3736 (CGGQ…FAGV). N-linked (GlcNAc...) asparagine glycosylation is found at N2885 and N2889. Intrachain disulfides connect C2898–C2921 and C2949–C2973. Residues N2960, N2965, and N2982 are each glycosylated (N-linked (GlcNAc...) asparagine). A disulfide bridge connects residues C3011 and C3039. 2 N-linked (GlcNAc...) asparagine glycosylation sites follow: N3040 and N3074. Intrachain disulfides connect C3070–C3092 and C3130–C3157. An N-linked (GlcNAc...) asparagine glycan is attached at N3160. Intrachain disulfides connect C3184/C3207, C3249/C3278, C3305/C3327, and C3368/C3402. N3256 carries an N-linked (GlcNAc...) asparagine glycan. N-linked (GlcNAc...) asparagine glycosylation occurs at N3427. C3430 and C3475 form a disulfide bridge. N3543, N3572, and N3645 each carry an N-linked (GlcNAc...) asparagine glycan. 3 disulfides stabilise this stretch: C3560–C3579, C3623–C3649, and C3676–C3699.

As to expression, specifically expressed in nephrocytes.

The protein localises to the cell membrane. Required in the nephrocyte for normal uptake of proteins and elimination of toxins, and for maintenance of endocytic trafficking structures. May function together with Amnionless. This is Cubilin homolog from Drosophila melanogaster (Fruit fly).